The primary structure comprises 240 residues: Sugar fermentation stimulation protein homolog (240 aa).

This sequence belongs to the SfsA family.

The protein is Sugar fermentation stimulation protein homolog of Crocosphaera subtropica (strain ATCC 51142 / BH68) (Cyanothece sp. (strain ATCC 51142)).